Consider the following 311-residue polypeptide: tRNA pseudouridine synthase B (311 aa).

Residue Asp-52 is the Nucleophile of the active site.

Belongs to the pseudouridine synthase TruB family. Type 1 subfamily.

It carries out the reaction uridine(55) in tRNA = pseudouridine(55) in tRNA. Responsible for synthesis of pseudouridine from uracil-55 in the psi GC loop of transfer RNAs. In Burkholderia mallei (strain ATCC 23344), this protein is tRNA pseudouridine synthase B.